The sequence spans 269 residues: Lysyl endopeptidase (269 aa).

Disulfide bonds link Cys-6–Cys-216, Cys-12–Cys-80, and Cys-36–Cys-58. Residues His-57, Asp-113, and Ser-194 each act as charge relay system in the active site.

This sequence belongs to the peptidase S1 family.

It localises to the secreted. It carries out the reaction Preferential cleavage: Lys-|-Xaa, including Lys-|-Pro.. Highly specific endopeptidase that hydrolyzes lysyl bonds including the Lys-Pro bond. The chain is Lysyl endopeptidase from Lysobacter enzymogenes.